Consider the following 296-residue polypeptide: tRNA (guanine-N(7)-)-methyltransferase (296 aa).

The interval 1–26 is disordered; the sequence is MSKRTREESEMEAGPSTASPGVSVSP. S-adenosyl-L-methionine contacts are provided by residues Gly101, 124–125, 168–169, and Leu188; these read EI and NS. Residue Asp191 is part of the active site. S-adenosyl-L-methionine is bound at residue 266-268; it reads TEE.

It belongs to the class I-like SAM-binding methyltransferase superfamily. TrmB family. As to quaternary structure, forms a complex with TRM82.

The protein resides in the nucleus. The catalysed reaction is guanosine(46) in tRNA + S-adenosyl-L-methionine = N(7)-methylguanosine(46) in tRNA + S-adenosyl-L-homocysteine. It participates in tRNA modification; N(7)-methylguanine-tRNA biosynthesis. Catalyzes the formation of N(7)-methylguanine at position 46 (m7G46) in tRNA. This chain is tRNA (guanine-N(7)-)-methyltransferase, found in Cryptococcus neoformans var. neoformans serotype D (strain JEC21 / ATCC MYA-565) (Filobasidiella neoformans).